Reading from the N-terminus, the 711-residue chain is Ribosomal RNA large subunit methyltransferase K/L (711 aa).

A THUMP domain is found at 42-153 (DAQRAVLWSR…KGRATISVDL (112 aa)).

This sequence belongs to the methyltransferase superfamily. RlmKL family.

It is found in the cytoplasm. It carries out the reaction guanosine(2445) in 23S rRNA + S-adenosyl-L-methionine = N(2)-methylguanosine(2445) in 23S rRNA + S-adenosyl-L-homocysteine + H(+). The enzyme catalyses guanosine(2069) in 23S rRNA + S-adenosyl-L-methionine = N(2)-methylguanosine(2069) in 23S rRNA + S-adenosyl-L-homocysteine + H(+). Functionally, specifically methylates the guanine in position 2445 (m2G2445) and the guanine in position 2069 (m7G2069) of 23S rRNA. In Xanthomonas campestris pv. campestris (strain 8004), this protein is Ribosomal RNA large subunit methyltransferase K/L.